The sequence spans 287 residues: MAAITAALVKELRERTGEGMMDCKKALEKAGGDIEKAIDDMRASGAIKAAKKAGNVAAEGAIAIKDDGKAAVLIEVNSQTDFLALQDDFKNFVAASVDKAFADKLTDAAPLIAAQEAAREALVAKVGENVNIRRLVRVEGDVVGTYLHGNKIGVAVVLKGGDVELAKDIAMHVAASNPEFLLPSQVSDEAIEREKAVFLQLNEEKIKGKPENIVENMVKGRISKFLAEASLVEQAFVKNPEIKVGELAKKGGAEIVSFTYFKVGEGIEKPVDNFAEEVAAQLAAAKQ.

Positions T80 to L83 are involved in Mg(2+) ion dislocation from EF-Tu.

Belongs to the EF-Ts family.

The protein resides in the cytoplasm. Associates with the EF-Tu.GDP complex and induces the exchange of GDP to GTP. It remains bound to the aminoacyl-tRNA.EF-Tu.GTP complex up to the GTP hydrolysis stage on the ribosome. This chain is Elongation factor Ts, found in Pseudomonas fluorescens (strain Pf0-1).